We begin with the raw amino-acid sequence, 491 residues long: UDP-N-acetylmuramate--L-alanine ligase (491 aa).

126–132 (GTHGKTT) contacts ATP.

The protein belongs to the MurCDEF family.

The protein resides in the cytoplasm. It carries out the reaction UDP-N-acetyl-alpha-D-muramate + L-alanine + ATP = UDP-N-acetyl-alpha-D-muramoyl-L-alanine + ADP + phosphate + H(+). It functions in the pathway cell wall biogenesis; peptidoglycan biosynthesis. Its function is as follows. Cell wall formation. This chain is UDP-N-acetylmuramate--L-alanine ligase, found in Salmonella typhimurium (strain LT2 / SGSC1412 / ATCC 700720).